A 642-amino-acid chain; its full sequence is Threonine--tRNA ligase (642 aa).

A TGS domain is found at 1-61; sequence MPVITLPDGS…ENDAQLSIIT (61 aa). The segment at 243-534 is catalytic; the sequence is DHRKIGKQLD…LTEEFAGFFP (292 aa). Zn(2+) contacts are provided by C334, H385, and H511.

It belongs to the class-II aminoacyl-tRNA synthetase family. As to quaternary structure, homodimer. Zn(2+) serves as cofactor.

It is found in the cytoplasm. The catalysed reaction is tRNA(Thr) + L-threonine + ATP = L-threonyl-tRNA(Thr) + AMP + diphosphate + H(+). In terms of biological role, catalyzes the attachment of threonine to tRNA(Thr) in a two-step reaction: L-threonine is first activated by ATP to form Thr-AMP and then transferred to the acceptor end of tRNA(Thr). Also edits incorrectly charged L-seryl-tRNA(Thr). This Enterobacter sp. (strain 638) protein is Threonine--tRNA ligase.